We begin with the raw amino-acid sequence, 481 residues long: Innexin inx6 (481 aa).

Topologically, residues 1-21 (MYAAVKPLSNYLRLKTVRIYD) are cytoplasmic. The helical transmembrane segment at 22–42 (PIFTLHSKCTIVILLTCTFLL) threads the bilayer. Residues 43–144 (SAKQYFGEPI…VTKRMYLRYY (102 aa)) lie on the Extracellular side of the membrane. Residues 145–165 (QWVFMILLFQSLLFYFPSFLW) traverse the membrane as a helical segment. The Cytoplasmic portion of the chain corresponds to 166 to 220 (KVWEGQRMEQLCCEVGDALIVEATYRTRLQMLTRYFRAQFAPIHWCYSIKYAFCE). The chain crosses the membrane as a helical span at residues 221–241 (LLNVFISILNFWLMDVVFNGF). Topologically, residues 242–302 (WYKYIHALAA…VLPLNILNEK (61 aa)) are extracellular. A helical membrane pass occupies residues 303-323 (IFAVLYVWFLFIALLAIMNIL). The Cytoplasmic segment spans residues 324-481 (YRLLVICCPE…MDRFFHESHA (158 aa)).

This sequence belongs to the pannexin family. Uniform expression in the imaginal wing disk. Expressed in an outer layer of the pupal developing CNS. Also expressed in pupal retina: cone cells and primary pigment cells.

It is found in the cell membrane. The protein localises to the cell junction. Its subcellular location is the gap junction. Its function is as follows. Structural components of the gap junctions. This chain is Innexin inx6 (Inx6), found in Drosophila melanogaster (Fruit fly).